The chain runs to 423 residues: Histidine--tRNA ligase (423 aa).

The protein belongs to the class-II aminoacyl-tRNA synthetase family. Homodimer.

The protein resides in the cytoplasm. It catalyses the reaction tRNA(His) + L-histidine + ATP = L-histidyl-tRNA(His) + AMP + diphosphate + H(+). The chain is Histidine--tRNA ligase from Shewanella loihica (strain ATCC BAA-1088 / PV-4).